A 174-amino-acid chain; its full sequence is Terminase small subunit (174 aa).

This sequence belongs to the skunalikevirus terminase small subunit family.

Probable terminase small subunit. The terminase lies at a unique vertex of the procapsid and is composed of two subunits, a small terminase subunit and a large terminase subunit. Both terminase subunits heterooligomerize and are docked on the portal protein to form the packaging machine. Once the capsid is packaged with the DNA, the terminase complex is substituted by the connector proteins gp15. This Lactococcus phage p2 (Lactococcus lactis bacteriophage p2) protein is Terminase small subunit.